The primary structure comprises 205 residues: Octanoyltransferase (205 aa).

The BPL/LPL catalytic domain occupies 30–205; the sequence is NSADELVWLL…ILKKEFYKIF (176 aa). Residues 68–75, 140–142, and 153–155 contribute to the substrate site; these read RGGKHTYH, AFG, and GIA. Cysteine 171 serves as the catalytic Acyl-thioester intermediate.

It belongs to the LipB family.

The protein localises to the cytoplasm. The catalysed reaction is octanoyl-[ACP] + L-lysyl-[protein] = N(6)-octanoyl-L-lysyl-[protein] + holo-[ACP] + H(+). The protein operates within protein modification; protein lipoylation via endogenous pathway; protein N(6)-(lipoyl)lysine from octanoyl-[acyl-carrier-protein]: step 1/2. In terms of biological role, catalyzes the transfer of endogenously produced octanoic acid from octanoyl-acyl-carrier-protein onto the lipoyl domains of lipoate-dependent enzymes. Lipoyl-ACP can also act as a substrate although octanoyl-ACP is likely to be the physiological substrate. The polypeptide is Octanoyltransferase (Wolbachia pipientis wMel).